The sequence spans 335 residues: Protein-lysine N-methyltransferase EEF2KMT (335 aa).

M1 carries the post-translational modification N-acetylmethionine. S-adenosyl-L-methionine-binding positions include W139, 165–167 (GSG), W228, and A247.

This sequence belongs to the class I-like SAM-binding methyltransferase superfamily. EEF2KMT family. As to quaternary structure, interacts with FAM86B2 and FAM86C1P.

It localises to the cytoplasm. The enzyme catalyses L-lysyl-[protein] + 3 S-adenosyl-L-methionine = N(6),N(6),N(6)-trimethyl-L-lysyl-[protein] + 3 S-adenosyl-L-homocysteine + 3 H(+). Catalyzes the trimethylation of eukaryotic elongation factor 2 (EEF2) on 'Lys-525'. The protein is Protein-lysine N-methyltransferase EEF2KMT (Eef2kmt) of Mus musculus (Mouse).